A 465-amino-acid chain; its full sequence is Ribulose bisphosphate carboxylase large chain (465 aa).

N6,N6,N6-trimethyllysine is present on K4. Substrate contacts are provided by N113 and T163. K165 serves as the catalytic Proton acceptor. K167 is a binding site for substrate. Mg(2+)-binding residues include K191, D193, and E194. At K191 the chain carries N6-carboxylysine. H284 (proton acceptor) is an active-site residue. Positions 285, 317, and 369 each coordinate substrate.

This sequence belongs to the RuBisCO large chain family. Type I subfamily. As to quaternary structure, heterohexadecamer of 8 large chains and 8 small chains; disulfide-linked. The disulfide link is formed within the large subunit homodimers. It depends on Mg(2+) as a cofactor. In terms of processing, the disulfide bond which can form in the large chain dimeric partners within the hexadecamer appears to be associated with oxidative stress and protein turnover.

It localises to the plastid. It is found in the chloroplast. It catalyses the reaction 2 (2R)-3-phosphoglycerate + 2 H(+) = D-ribulose 1,5-bisphosphate + CO2 + H2O. The enzyme catalyses D-ribulose 1,5-bisphosphate + O2 = 2-phosphoglycolate + (2R)-3-phosphoglycerate + 2 H(+). Functionally, ruBisCO catalyzes two reactions: the carboxylation of D-ribulose 1,5-bisphosphate, the primary event in carbon dioxide fixation, as well as the oxidative fragmentation of the pentose substrate in the photorespiration process. Both reactions occur simultaneously and in competition at the same active site. The sequence is that of Ribulose bisphosphate carboxylase large chain from Cornus florida (Flowering dogwood).